Consider the following 321-residue polypeptide: Lipoyl synthase (321 aa).

[4Fe-4S] cluster is bound by residues C68, C73, C79, C94, C98, C101, and S308. Residues 80-297 (FNHGTATFMI…KEIALELGFT (218 aa)) enclose the Radical SAM core domain.

This sequence belongs to the radical SAM superfamily. Lipoyl synthase family. It depends on [4Fe-4S] cluster as a cofactor.

Its subcellular location is the cytoplasm. The enzyme catalyses [[Fe-S] cluster scaffold protein carrying a second [4Fe-4S](2+) cluster] + N(6)-octanoyl-L-lysyl-[protein] + 2 oxidized [2Fe-2S]-[ferredoxin] + 2 S-adenosyl-L-methionine + 4 H(+) = [[Fe-S] cluster scaffold protein] + N(6)-[(R)-dihydrolipoyl]-L-lysyl-[protein] + 4 Fe(3+) + 2 hydrogen sulfide + 2 5'-deoxyadenosine + 2 L-methionine + 2 reduced [2Fe-2S]-[ferredoxin]. Its pathway is protein modification; protein lipoylation via endogenous pathway; protein N(6)-(lipoyl)lysine from octanoyl-[acyl-carrier-protein]: step 2/2. Functionally, catalyzes the radical-mediated insertion of two sulfur atoms into the C-6 and C-8 positions of the octanoyl moiety bound to the lipoyl domains of lipoate-dependent enzymes, thereby converting the octanoylated domains into lipoylated derivatives. The chain is Lipoyl synthase from Aliivibrio fischeri (strain ATCC 700601 / ES114) (Vibrio fischeri).